The sequence spans 101 residues: MSRKSVIQRNLKRISICSRLKSKRDELKAIIKDQSISMNDRFLAQVKLSKLPRDSSYIRIRNRCLVTGRPRGCYRKFKVSRIVLRQLGSIGQIPGLTKSSW.

It belongs to the universal ribosomal protein uS14 family. Part of the 30S ribosomal subunit. Contacts proteins S3 and S10.

Binds 16S rRNA, required for the assembly of 30S particles and may also be responsible for determining the conformation of the 16S rRNA at the A site. The sequence is that of Small ribosomal subunit protein uS14 from Ehrlichia canis (strain Jake).